The primary structure comprises 254 residues: Imidazole glycerol phosphate synthase subunit HisF (254 aa).

Residues D12 and D131 contribute to the active site.

This sequence belongs to the HisA/HisF family. Heterodimer of HisH and HisF.

The protein resides in the cytoplasm. The enzyme catalyses 5-[(5-phospho-1-deoxy-D-ribulos-1-ylimino)methylamino]-1-(5-phospho-beta-D-ribosyl)imidazole-4-carboxamide + L-glutamine = D-erythro-1-(imidazol-4-yl)glycerol 3-phosphate + 5-amino-1-(5-phospho-beta-D-ribosyl)imidazole-4-carboxamide + L-glutamate + H(+). The protein operates within amino-acid biosynthesis; L-histidine biosynthesis; L-histidine from 5-phospho-alpha-D-ribose 1-diphosphate: step 5/9. IGPS catalyzes the conversion of PRFAR and glutamine to IGP, AICAR and glutamate. The HisF subunit catalyzes the cyclization activity that produces IGP and AICAR from PRFAR using the ammonia provided by the HisH subunit. This Kocuria rhizophila (strain ATCC 9341 / DSM 348 / NBRC 103217 / DC2201) protein is Imidazole glycerol phosphate synthase subunit HisF.